The sequence spans 1254 residues: Histone-lysine N-methyltransferase eggless (1254 aa).

Disordered stretches follow at residues 24-209 and 228-248; these read ALVE…EIPR and PVPRSKAMQESKETQKTSKTT. Composition is skewed to basic and acidic residues over residues 40–57 and 65–81; these read TPEKKAKMEIDAEMKDLT and KSQEKDPDALEDAKDPE. Low complexity predominate over residues 112–125; that stretch reads SVELLESPLKSPSS. Basic and acidic residues predominate over residues 136–162; that stretch reads LEEKEKPGPAKELEPKESEPDSKESSK. A compositionally biased stretch (polar residues) spans 172 to 181; it reads ELISSPTSDD. Composition is skewed to basic and acidic residues over residues 182–197 and 234–243; these read SLAKEKEVEVKEEHGQ and AMQESKETQK. Positions 391 to 416 form a coiled coil; sequence TILQAKIERLAKKFEEVDLQLAQVQG. 2 consecutive Tudor domains span residues 535-607 and 634-691; these read RLPI…SEKV and QCTK…KETQ. The disordered stretch occupies residues 734-760; that stretch reads ARKSTSKSGSPASTAAPPTGSSSSSAV. Low complexity predominate over residues 739–759; sequence SKSGSPASTAAPPTGSSSSSA. Residues 811–877 form the MBD domain; sequence LDSYSPLSKP…DNFDFTPDLR (67 aa). The region spanning 939–1011 is the Pre-SET domain; sequence VCCDCEDDCS…NCLNRVVQHS (73 aa). Zn(2+) contacts are provided by C941, C943, C947, C953, C955, C993, C997, C999, and C1003. The SET domain maps to 1014 to 1229; the sequence is MKLQVFKTSN…SGTELTWNYN (216 aa). S-adenosyl-L-methionine contacts are provided by residues 1024–1026, D1062, and Y1064; that span reads RGW. Over residues 1081-1090 the composition is skewed to basic and acidic residues; the sequence is YESDVERADL. The tract at residues 1081 to 1139 is disordered; sequence YESDVERADLDHEDDNYGPDAEDDDDFRPNNYYQKKKEKLRSSRSNSSSTQNTELDSQE. The segment covering 1091–1106 has biased composition (acidic residues); it reads DHEDDNYGPDAEDDDD. A compositionally biased stretch (low complexity) spans 1123–1134; the sequence is SRSNSSSTQNTE. Residues R1183 and 1186 to 1187 each bind S-adenosyl-L-methionine; that span reads NH. Zn(2+)-binding residues include C1189, C1242, C1244, and C1249. A Post-SET domain is found at 1238-1254; the sequence is KVLYCQCGAQNCRVRLL.

Belongs to the class V-like SAM-binding methyltransferase superfamily. Histone-lysine methyltransferase family. Suvar3-9 subfamily.

Its subcellular location is the nucleus. It localises to the chromosome. It carries out the reaction L-lysyl(9)-[histone H3] + 3 S-adenosyl-L-methionine = N(6),N(6),N(6)-trimethyl-L-lysyl(9)-[histone H3] + 3 S-adenosyl-L-homocysteine + 3 H(+). Histone methyltransferase that specifically trimethylates 'Lys-9' of histone H3 in ovary. H3 'Lys-9' trimethylation represents a specific tag for epigenetic transcriptional repression by recruiting Su(var)205/HP1 to methylated histones. Plays a central role during oogenesis. This Drosophila pseudoobscura pseudoobscura (Fruit fly) protein is Histone-lysine N-methyltransferase eggless (egg).